The chain runs to 69 residues: Cytochrome c oxidase subunit 8A, mitochondrial (69 aa).

A mitochondrion-targeting transit peptide spans 1–25 (MSVLTPLLLRGLTGSARRLPVPCAR). An SIFI-degron motif is present at residues 2–19 (SVLTPLLLRGLTGSARRL). Residues 26-36 (VHSKPPREQLG) lie on the Mitochondrial matrix side of the membrane. Residues 37 to 60 (TMDIAIGLTSCFVCFLLPSGWVLS) traverse the membrane as a helical segment. Over 61–69 (HLENYKKRE) the chain is Mitochondrial intermembrane.

Belongs to the cytochrome c oxidase VIII family. As to quaternary structure, component of the cytochrome c oxidase (complex IV, CIV), a multisubunit enzyme composed of 14 subunits. The complex is composed of a catalytic core of 3 subunits MT-CO1, MT-CO2 and MT-CO3, encoded in the mitochondrial DNA, and 11 supernumerary subunits COX4I, COX5A, COX5B, COX6A, COX6B, COX6C, COX7A, COX7B, COX7C, COX8 and NDUFA4, which are encoded in the nuclear genome. The complex exists as a monomer or a dimer and forms supercomplexes (SCs) in the inner mitochondrial membrane with NADH-ubiquinone oxidoreductase (complex I, CI) and ubiquinol-cytochrome c oxidoreductase (cytochrome b-c1 complex, complex III, CIII), resulting in different assemblies (supercomplex SCI(1)III(2)IV(1) and megacomplex MCI(2)III(2)IV(2)). In response to mitochondrial stress, the precursor protein is ubiquitinated by the SIFI complex in the cytoplasm before mitochondrial import, leading to its degradation. Within the SIFI complex, UBR4 initiates ubiquitin chain that are further elongated or branched by KCMF1.

The protein localises to the mitochondrion inner membrane. It functions in the pathway energy metabolism; oxidative phosphorylation. Its function is as follows. Component of the cytochrome c oxidase, the last enzyme in the mitochondrial electron transport chain which drives oxidative phosphorylation. The respiratory chain contains 3 multisubunit complexes succinate dehydrogenase (complex II, CII), ubiquinol-cytochrome c oxidoreductase (cytochrome b-c1 complex, complex III, CIII) and cytochrome c oxidase (complex IV, CIV), that cooperate to transfer electrons derived from NADH and succinate to molecular oxygen, creating an electrochemical gradient over the inner membrane that drives transmembrane transport and the ATP synthase. Cytochrome c oxidase is the component of the respiratory chain that catalyzes the reduction of oxygen to water. Electrons originating from reduced cytochrome c in the intermembrane space (IMS) are transferred via the dinuclear copper A center (CU(A)) of subunit 2 and heme A of subunit 1 to the active site in subunit 1, a binuclear center (BNC) formed by heme A3 and copper B (CU(B)). The BNC reduces molecular oxygen to 2 water molecules using 4 electrons from cytochrome c in the IMS and 4 protons from the mitochondrial matrix. The polypeptide is Cytochrome c oxidase subunit 8A, mitochondrial (COX8A) (Otolemur crassicaudatus (Brown greater galago)).